Here is a 300-residue protein sequence, read N- to C-terminus: NADH-cytochrome b5 reductase 2 (300 aa).

A helical membrane pass occupies residues 12–29; it reads FVYPLVGATIGSIGLAYY. In terms of domain architecture, FAD-binding FR-type spans 49 to 153; sequence DQWIDLKLKK…KGPVVKWKWE (105 aa). Residue 156–191 coordinates FAD; that stretch reads QFKSIALIGGGTGITPLYQLLREITSNPEDKTKVSL.

Belongs to the flavoprotein pyridine nucleotide cytochrome reductase family. FAD is required as a cofactor.

Its subcellular location is the mitochondrion outer membrane. It carries out the reaction 2 Fe(III)-[cytochrome b5] + NADH = 2 Fe(II)-[cytochrome b5] + NAD(+) + H(+). In terms of biological role, may mediate the reduction of outer membrane cytochrome b5. The chain is NADH-cytochrome b5 reductase 2 (MCR1) from Lodderomyces elongisporus (strain ATCC 11503 / CBS 2605 / JCM 1781 / NBRC 1676 / NRRL YB-4239) (Yeast).